The sequence spans 400 residues: Elongation factor Tu (400 aa).

The region spanning 10–208 (KPHVNVGTIG…AMDNYIPEPQ (199 aa)) is the tr-type G domain. Positions 19–26 (GHIDHGKS) are G1. 19 to 26 (GHIDHGKS) serves as a coordination point for GTP. Ser26 is a binding site for Mg(2+). Residues 60-64 (GITIN) form a G2 region. The segment at 81-84 (DCPG) is G3. GTP is bound by residues 81 to 85 (DCPGH) and 136 to 139 (NKTD). Positions 136–139 (NKTD) are G4. Residues 174–176 (SAL) form a G5 region.

Belongs to the TRAFAC class translation factor GTPase superfamily. Classic translation factor GTPase family. EF-Tu/EF-1A subfamily. In terms of assembly, monomer.

It localises to the cytoplasm. It carries out the reaction GTP + H2O = GDP + phosphate + H(+). Functionally, GTP hydrolase that promotes the GTP-dependent binding of aminoacyl-tRNA to the A-site of ribosomes during protein biosynthesis. This chain is Elongation factor Tu, found in Thermotoga petrophila (strain ATCC BAA-488 / DSM 13995 / JCM 10881 / RKU-1).